Reading from the N-terminus, the 213-residue chain is Guanylate kinase (213 aa).

Positions 12–190 (GLCLVVAAPS…AIDQVRTILH (179 aa)) constitute a Guanylate kinase-like domain. An ATP-binding site is contributed by 19-26 (APSGAGKS).

Belongs to the guanylate kinase family.

Its subcellular location is the cytoplasm. It carries out the reaction GMP + ATP = GDP + ADP. Essential for recycling GMP and indirectly, cGMP. This Granulibacter bethesdensis (strain ATCC BAA-1260 / CGDNIH1) protein is Guanylate kinase.